The chain runs to 85 residues: Small ribosomal subunit protein bS18c (85 aa).

It belongs to the bacterial ribosomal protein bS18 family. Part of the 30S ribosomal subunit.

It is found in the plastid. The protein localises to the chloroplast. This Zygnema circumcarinatum (Green alga) protein is Small ribosomal subunit protein bS18c.